Reading from the N-terminus, the 213-residue chain is Orotate phosphoribosyltransferase (213 aa).

K26 lines the 5-phospho-alpha-D-ribose 1-diphosphate pocket. An orotate-binding site is contributed by 34-35; sequence FF. 5-phospho-alpha-D-ribose 1-diphosphate contacts are provided by residues 72 to 73, R99, K100, K103, H105, and 124 to 132; these read YK and DDVITAGTA. 2 residues coordinate orotate: T128 and R156.

Belongs to the purine/pyrimidine phosphoribosyltransferase family. PyrE subfamily. Homodimer. It depends on Mg(2+) as a cofactor.

It catalyses the reaction orotidine 5'-phosphate + diphosphate = orotate + 5-phospho-alpha-D-ribose 1-diphosphate. Its pathway is pyrimidine metabolism; UMP biosynthesis via de novo pathway; UMP from orotate: step 1/2. Catalyzes the transfer of a ribosyl phosphate group from 5-phosphoribose 1-diphosphate to orotate, leading to the formation of orotidine monophosphate (OMP). This chain is Orotate phosphoribosyltransferase, found in Vibrio cholerae serotype O1 (strain ATCC 39315 / El Tor Inaba N16961).